The chain runs to 727 residues: Prolyl endopeptidase-like (727 aa).

M1 carries the N-acetylmethionine modification. Catalysis depends on charge relay system residues S559, D645, and H690.

It belongs to the peptidase S9A family. In terms of assembly, homodimer. Interacts with the AP-1 complex. Expressed in pyramidal neurons of the temporal cortex and neocortex (at protein level). Widely expressed. Expressed at higher level in brain, skeletal muscle, heart and kidney. Expressed at the endplates in the neuromuscular junction.

The protein localises to the cytoplasm. It is found in the cytosol. Its subcellular location is the golgi apparatus. The protein resides in the trans-Golgi network. It localises to the cytoskeleton. The protein localises to the nucleus. Inhibited by PMSF and Prefabloc, as well as leupeptin at high concentrations. Partially inhibited by TPCK, a chymotrypsin inhibitor and E64, a cysteine protease inhibitor. Not affected by 4-amidinophenyl-methanesulfonyl fluoride (APMSF), pepstatin or EDTA. Inhibited by 1-isobutyl-3-oxo-3,5,6,7-tetrahydro-2H-cyclopenta[c]pyridine-4-carbonitrile. Functionally, serine peptidase whose precise substrate specificity remains unclear. Does not cleave peptides after a arginine or lysine residue. Regulates trans-Golgi network morphology and sorting by regulating the membrane binding of the AP-1 complex. May play a role in the regulation of synaptic vesicle exocytosis. This Homo sapiens (Human) protein is Prolyl endopeptidase-like (PREPL).